We begin with the raw amino-acid sequence, 245 residues long: Fibroblast growth factor-binding protein 3 (245 aa).

A signal peptide spans 1 to 28 (MSPPRPRASLSPLTLLLLLGGCLLSAAG). The tract at residues 33 to 52 (AAGREVTRASRPTVGSSGRF) is disordered. Intrachain disulfides connect Cys-60-Cys-81 and Cys-91-Cys-125. The disordered stretch occupies residues 136–216 (CARKTAGSDL…PAAAGFQPNG (81 aa)). Over residues 170–180 (RSRQSVRSPSS) the composition is skewed to low complexity. Cys-228 and Cys-236 are joined by a disulfide.

This sequence belongs to the fibroblast growth factor-binding protein family. In terms of assembly, interacts with FGF2. In the adult, highly expressed in brain with lower levels in ovary. In the embryo, highest levels are found in the brain and spinal cord at 14 dpc and expression is almost completely restricted to the brain by 18 dpc. In the adult and postnatal brain, highly expressed in the orbitofrontal cortex where it is concentrated primarily in differentiated neurons.

Its subcellular location is the secreted. In terms of biological role, heparin-binding protein which binds to FGF2, prevents binding of FGF2 to heparin and probably inhibits immobilization of FGF2 on extracellular matrix glycosaminoglycans, allowing its release and subsequent activation of FGFR signaling which leads to increased vascular permeability. This chain is Fibroblast growth factor-binding protein 3 (Fgfbp3), found in Mus musculus (Mouse).